The chain runs to 515 residues: ATP synthase subunit alpha (515 aa).

Position 171–178 (G171–T178) interacts with ATP.

The protein belongs to the ATPase alpha/beta chains family. As to quaternary structure, F-type ATPases have 2 components, CF(1) - the catalytic core - and CF(0) - the membrane proton channel. CF(1) has five subunits: alpha(3), beta(3), gamma(1), delta(1), epsilon(1). CF(0) has three main subunits: a(1), b(2) and c(9-12). The alpha and beta chains form an alternating ring which encloses part of the gamma chain. CF(1) is attached to CF(0) by a central stalk formed by the gamma and epsilon chains, while a peripheral stalk is formed by the delta and b chains.

The protein localises to the cell inner membrane. The catalysed reaction is ATP + H2O + 4 H(+)(in) = ADP + phosphate + 5 H(+)(out). In terms of biological role, produces ATP from ADP in the presence of a proton gradient across the membrane. The alpha chain is a regulatory subunit. The polypeptide is ATP synthase subunit alpha (Coxiella burnetii (strain CbuK_Q154) (Coxiella burnetii (strain Q154))).